The chain runs to 147 residues: Large ribosomal subunit protein uL13 (147 aa).

It belongs to the universal ribosomal protein uL13 family. As to quaternary structure, part of the 50S ribosomal subunit.

Functionally, this protein is one of the early assembly proteins of the 50S ribosomal subunit, although it is not seen to bind rRNA by itself. It is important during the early stages of 50S assembly. The protein is Large ribosomal subunit protein uL13 of Leuconostoc mesenteroides subsp. mesenteroides (strain ATCC 8293 / DSM 20343 / BCRC 11652 / CCM 1803 / JCM 6124 / NCDO 523 / NBRC 100496 / NCIMB 8023 / NCTC 12954 / NRRL B-1118 / 37Y).